The primary structure comprises 413 residues: Arginine deiminase (413 aa).

C403 acts as the Amidino-cysteine intermediate in catalysis.

Belongs to the arginine deiminase family.

Its subcellular location is the cytoplasm. The catalysed reaction is L-arginine + H2O = L-citrulline + NH4(+). It participates in amino-acid degradation; L-arginine degradation via ADI pathway; carbamoyl phosphate from L-arginine: step 1/2. In Clostridium perfringens (strain SM101 / Type A), this protein is Arginine deiminase.